The chain runs to 152 residues: 3-dehydroquinate dehydratase (152 aa).

The active-site Proton acceptor is tyrosine 23. Substrate-binding residues include asparagine 74, histidine 80, and aspartate 87. Catalysis depends on histidine 100, which acts as the Proton donor. Substrate contacts are provided by residues 101 to 102 (LS) and arginine 111.

This sequence belongs to the type-II 3-dehydroquinase family. Homododecamer.

It catalyses the reaction 3-dehydroquinate = 3-dehydroshikimate + H2O. The protein operates within metabolic intermediate biosynthesis; chorismate biosynthesis; chorismate from D-erythrose 4-phosphate and phosphoenolpyruvate: step 3/7. Functionally, catalyzes a trans-dehydration via an enolate intermediate. This Clostridium botulinum (strain Langeland / NCTC 10281 / Type F) protein is 3-dehydroquinate dehydratase.